The sequence spans 78 residues: U-scoloptoxin(13)-Er1a (78 aa).

The signal sequence occupies residues 1-24 (MFPSWSTTFVLCMGLCSLMNGALA).

It belongs to the scoloptoxin-13 family. Post-translationally, contains 4 disulfide bonds. Expressed by the venom gland.

The protein resides in the secreted. The protein is U-scoloptoxin(13)-Er1a of Ethmostigmus rubripes (Giant centipede).